We begin with the raw amino-acid sequence, 150 residues long: Small ribosomal subunit protein uS11 (150 aa).

The tract at residues 130–150 is disordered; sequence DVTPIPSDSTRRKSGRRGRRL. A compositionally biased stretch (basic residues) spans 141–150; sequence RKSGRRGRRL.

This sequence belongs to the universal ribosomal protein uS11 family.

The chain is Small ribosomal subunit protein uS11 (RPS14) from Lupinus luteus (European yellow lupine).